A 194-amino-acid polypeptide reads, in one-letter code: ATP-dependent Clp protease proteolytic subunit 3 (194 aa).

The active-site Nucleophile is Ser96. His121 is a catalytic residue.

It belongs to the peptidase S14 family. As to quaternary structure, fourteen ClpP subunits assemble into 2 heptameric rings which stack back to back to give a disk-like structure with a central cavity, resembling the structure of eukaryotic proteasomes.

Its subcellular location is the cytoplasm. It carries out the reaction Hydrolysis of proteins to small peptides in the presence of ATP and magnesium. alpha-casein is the usual test substrate. In the absence of ATP, only oligopeptides shorter than five residues are hydrolyzed (such as succinyl-Leu-Tyr-|-NHMec, and Leu-Tyr-Leu-|-Tyr-Trp, in which cleavage of the -Tyr-|-Leu- and -Tyr-|-Trp bonds also occurs).. Its function is as follows. Cleaves peptides in various proteins in a process that requires ATP hydrolysis. Has a chymotrypsin-like activity. Plays a major role in the degradation of misfolded proteins. This chain is ATP-dependent Clp protease proteolytic subunit 3, found in Rhizobium etli (strain ATCC 51251 / DSM 11541 / JCM 21823 / NBRC 15573 / CFN 42).